The chain runs to 101 residues: Protein Tat (101 aa).

The interval Met-1–Asn-24 is interaction with human CREBBP. A transactivation region spans residues Met-1–Gly-48. Zn(2+) contacts are provided by Cys-22, Cys-25, and Cys-27. The interval Cys-22–Cys-37 is cysteine-rich. The residue at position 28 (Lys-28) is an N6-acetyllysine; by host PCAF. Positions 30, 33, 34, and 37 each coordinate Zn(2+). Positions Phe-38 to Gly-48 are core. A disordered region spans residues Tyr-47–Asp-101. The Nuclear localization signal, RNA-binding (TAR), and protein transduction motif lies at Arg-49 to Ser-57. The tract at residues Arg-49 to Glu-86 is interaction with the host capping enzyme RNGTT. N6-acetyllysine; by host EP300 and GCN5L2 is present on residues Lys-50 and Lys-51. Asymmetric dimethylarginine; by host PRMT6 occurs at positions 52 and 53. A Glycyl lysine isopeptide (Lys-Gly) (interchain with G-Cter in ubiquitin) cross-link involves residue Lys-71. The Cell attachment site motif lies at Arg-78–Asp-80. A compositionally biased stretch (basic and acidic residues) spans Glu-85–Asp-101.

It belongs to the lentiviruses Tat family. As to quaternary structure, interacts with host CCNT1. Associates with the P-TEFb complex composed at least of Tat, P-TEFb (CDK9 and CCNT1), TAR RNA, RNA Pol II. Recruits the HATs CREBBP, TAF1/TFIID, EP300, PCAF and GCN5L2. Interacts with host KAT5/Tip60; this interaction targets the latter to degradation. Interacts with the host deacetylase SIRT1. Interacts with host capping enzyme RNGTT; this interaction stimulates RNGTT. Binds to host KDR, and to the host integrins ITGAV/ITGB3 and ITGA5/ITGB1. Interacts with host KPNB1/importin beta-1 without previous binding to KPNA1/importin alpha-1. Interacts with EIF2AK2. Interacts with host nucleosome assembly protein NAP1L1; this interaction may be required for the transport of Tat within the nucleus, since the two proteins interact at the nuclear rim. Interacts with host C1QBP/SF2P32; this interaction involves lysine-acetylated Tat. Interacts with the host chemokine receptors CCR2, CCR3 and CXCR4. Interacts with host DPP4/CD26; this interaction may trigger an anti-proliferative effect. Interacts with host LDLR. Interacts with the host extracellular matrix metalloproteinase MMP1. Interacts with host PRMT6; this interaction mediates Tat's methylation. Interacts with, and is ubiquitinated by MDM2/Hdm2. Interacts with host PSMC3 and HTATIP2. Interacts with STAB1; this interaction may overcome SATB1-mediated repression of IL2 and IL2RA (interleukin) in T cells by binding to the same domain than HDAC1. Interacts (when acetylated) with human CDK13, thereby increasing HIV-1 mRNA splicing and promoting the production of the doubly spliced HIV-1 protein Nef. Interacts with host TBP; this interaction modulates the activity of transcriptional pre-initiation complex. Interacts with host RELA. Interacts with host PLSCR1; this interaction negatively regulates Tat transactivation activity by altering its subcellular distribution. In terms of processing, asymmetrical arginine methylation by host PRMT6 seems to diminish the transactivation capacity of Tat and affects the interaction with host CCNT1. Acetylation by EP300, CREBBP, GCN5L2/GCN5 and PCAF regulates the transactivation activity of Tat. EP300-mediated acetylation of Lys-50 promotes dissociation of Tat from the TAR RNA through the competitive binding to PCAF's bromodomain. In addition, the non-acetylated Tat's N-terminus can also interact with PCAF. PCAF-mediated acetylation of Lys-28 enhances Tat's binding to CCNT1. Lys-50 is deacetylated by SIRT1. Post-translationally, polyubiquitination by host MDM2 does not target Tat to degradation, but activates its transactivation function and fosters interaction with CCNT1 and TAR RNA. In terms of processing, phosphorylated by EIF2AK2 on serine and threonine residues adjacent to the basic region important for TAR RNA binding and function. Phosphorylation of Tat by EIF2AK2 is dependent on the prior activation of EIF2AK2 by dsRNA.

It localises to the host nucleus. The protein localises to the host nucleolus. The protein resides in the host cytoplasm. It is found in the secreted. Functionally, transcriptional activator that increases RNA Pol II processivity, thereby increasing the level of full-length viral transcripts. Recognizes a hairpin structure at the 5'-LTR of the nascent viral mRNAs referred to as the transactivation responsive RNA element (TAR) and recruits the cyclin T1-CDK9 complex (P-TEFb complex) that will in turn hyperphosphorylate the RNA polymerase II to allow efficient elongation. The CDK9 component of P-TEFb and other Tat-activated kinases hyperphosphorylate the C-terminus of RNA Pol II that becomes stabilized and much more processive. Other factors such as HTATSF1/Tat-SF1, SUPT5H/SPT5, and HTATIP2 are also important for Tat's function. Besides its effect on RNA Pol II processivity, Tat induces chromatin remodeling of proviral genes by recruiting the histone acetyltransferases (HATs) CREBBP, EP300 and PCAF to the chromatin. This also contributes to the increase in proviral transcription rate, especially when the provirus integrates in transcriptionally silent region of the host genome. To ensure maximal activation of the LTR, Tat mediates nuclear translocation of NF-kappa-B by interacting with host RELA. Through its interaction with host TBP, Tat may also modulate transcription initiation. Tat can reactivate a latently infected cell by penetrating in it and transactivating its LTR promoter. In the cytoplasm, Tat is thought to act as a translational activator of HIV-1 mRNAs. Extracellular circulating Tat can be endocytosed by surrounding uninfected cells via the binding to several surface receptors such as CD26, CXCR4, heparan sulfate proteoglycans (HSPG) or LDLR. Neurons are rarely infected, but they internalize Tat via their LDLR. Through its interaction with nuclear HATs, Tat is potentially able to control the acetylation-dependent cellular gene expression. Modulates the expression of many cellular genes involved in cell survival, proliferation or in coding for cytokines or cytokine receptors. Tat plays a role in T-cell and neurons apoptosis. Tat induced neurotoxicity and apoptosis probably contribute to neuroAIDS. Circulating Tat also acts as a chemokine-like and/or growth factor-like molecule that binds to specific receptors on the surface of the cells, affecting many cellular pathways. In the vascular system, Tat binds to ITGAV/ITGB3 and ITGA5/ITGB1 integrins dimers at the surface of endothelial cells and competes with bFGF for heparin-binding sites, leading to an excess of soluble bFGF. The polypeptide is Protein Tat (Human immunodeficiency virus type 1 group M subtype C (isolate 92BR025) (HIV-1)).